A 178-amino-acid polypeptide reads, in one-letter code: Ribosome maturation factor RimM (178 aa).

The PRC barrel domain occupies 101–178 (ADEYYWYQLV…VMRVEWDADF (78 aa)).

The protein belongs to the RimM family. As to quaternary structure, binds ribosomal protein uS19.

Its subcellular location is the cytoplasm. An accessory protein needed during the final step in the assembly of 30S ribosomal subunit, possibly for assembly of the head region. Essential for efficient processing of 16S rRNA. May be needed both before and after RbfA during the maturation of 16S rRNA. It has affinity for free ribosomal 30S subunits but not for 70S ribosomes. In Pseudomonas putida (strain ATCC 47054 / DSM 6125 / CFBP 8728 / NCIMB 11950 / KT2440), this protein is Ribosome maturation factor RimM.